The following is a 1071-amino-acid chain: Tricorn protease (1071 aa).

The tract at residues 39–310 (MPNLLLNPDI…EKIEKIEIGD (272 aa)) is six-bladed beta propeller. A binds the substrate's C-terminus region spans residues 131–132 (RR). The seven-bladed beta propeller stretch occupies residues 326–675 (AEDFSPLDGD…EDERTVETDK (350 aa)). The interval 679-745 (VSSIHEEFLQ…VEMQGEYRTS (67 aa)) is C-1; helical bundle. His-746 acts as the Charge relay system in catalysis. A PDZ-like region spans residues 761–855 (RSGRIACDFK…DLMIDILDDD (95 aa)). The tract at residues 856-1061 (RFIRYRSWVE…IDALIEELRN (206 aa)) is C-2; alpha-beta sandwich. 916–918 (GGG) is a substrate binding site. The active-site Nucleophile is Ser-965. 993–995 (GIT) provides a ligand contact to substrate. The active-site Charge relay system is the Glu-1023.

It belongs to the peptidase S41B family. As to quaternary structure, part of the Tricorn proteolytic complex. Assembles to form a hexameric toroid, 20 copies of which may then assemble to form an icosahedral supermolecule of 14.6 MDa.

The protein localises to the cytoplasm. Tricorn degrades oligopeptides (probably derived from the proteasome) and channels the products to F1, F2 and F3 proteases, which then catalyze the terminal degradation step, yielding free amino acids. The protein is Tricorn protease (tri) of Thermoplasma acidophilum (strain ATCC 25905 / DSM 1728 / JCM 9062 / NBRC 15155 / AMRC-C165).